The following is a 64-amino-acid chain: Large ribosomal subunit protein bL35 (64 aa).

The interval Met1–Lys21 is disordered. Basic residues predominate over residues Ala10–Lys21.

This sequence belongs to the bacterial ribosomal protein bL35 family.

This Nautilia profundicola (strain ATCC BAA-1463 / DSM 18972 / AmH) protein is Large ribosomal subunit protein bL35.